A 314-amino-acid polypeptide reads, in one-letter code: Malate dehydrogenase (314 aa).

Residues 7 to 13 and D34 contribute to the NAD(+) site; that span reads GAAGGIG. R81 and R87 together coordinate substrate. NAD(+)-binding positions include N94 and 117–119; that span reads ITN. Positions 119 and 153 each coordinate substrate. H177 functions as the Proton acceptor in the catalytic mechanism. An NAD(+)-binding site is contributed by M230.

This sequence belongs to the LDH/MDH superfamily. MDH type 1 family. As to quaternary structure, homodimer.

The catalysed reaction is (S)-malate + NAD(+) = oxaloacetate + NADH + H(+). In terms of biological role, catalyzes the reversible oxidation of malate to oxaloacetate. This chain is Malate dehydrogenase, found in Glaesserella parasuis serovar 5 (strain SH0165) (Haemophilus parasuis).